The primary structure comprises 137 residues: ATP synthase epsilon chain (137 aa).

Belongs to the ATPase epsilon chain family. In terms of assembly, F-type ATPases have 2 components, CF(1) - the catalytic core - and CF(0) - the membrane proton channel. CF(1) has five subunits: alpha(3), beta(3), gamma(1), delta(1), epsilon(1). CF(0) has three main subunits: a, b and c.

The protein localises to the cell membrane. Functionally, produces ATP from ADP in the presence of a proton gradient across the membrane. In Caldicellulosiruptor saccharolyticus (strain ATCC 43494 / DSM 8903 / Tp8T 6331), this protein is ATP synthase epsilon chain.